The following is a 930-amino-acid chain: Vacuolar membrane protease (930 aa).

Residues 1-28 are disordered; sequence MPQEEVHDTSSVSDDNLTNTGGGGSNYY. At 1–49 the chain is on the cytoplasmic side; the sequence is MPQEEVHDTSSVSDDNLTNTGGGGSNYYNSHNQPNVFVRAIRSIFGYRK. Residues 50 to 70 form a helical membrane-spanning segment; the sequence is TSLTLFVILTIIFTIALSLYD. Residues 71 to 379 lie on the Vacuolar side of the membrane; sequence NNLDLTIELP…YFFSSPISAL (309 aa). A glycan (N-linked (GlcNAc...) asparagine) is linked at N163. 2 residues coordinate Zn(2+): H177 and D189. E222 acts as the Proton acceptor in catalysis. Zn(2+) contacts are provided by E223, E248, and H320. An N-linked (GlcNAc...) asparagine glycan is attached at N354. Residues 380 to 400 form a helical membrane-spanning segment; sequence VTINSVLIVLFPILSGPLLFI. Topologically, residues 401-411 are cytoplasmic; it reads TVRYKKWKIGT. A helical membrane pass occupies residues 412 to 432; that stretch reads SNFLSLPLAIVLTVAIVMIVV. Residues 433–449 are Vacuolar-facing; sequence NQGFQIANPFLPSSHPL. A helical transmembrane segment spans residues 450 to 470; sequence LLVATTTSISLLIYYVFLNGV. The Cytoplasmic portion of the chain corresponds to 471–480; that stretch reads NWVSPSGDQK. The helical transmembrane segment at 481 to 501 threads the bilayer; that stretch reads LITIIEISFIYWLILIYVTHG. The Vacuolar portion of the chain corresponds to 502–514; that stretch reads LSQNKIGDDHTGE. A helical transmembrane segment spans residues 515-535; sequence FPFTVLFFLEATASLFGLIGW. The Cytoplasmic portion of the chain corresponds to 536-598; the sequence is TFSRSIKQSS…FGYDWSLQYL (63 aa). The tract at residues 542 to 570 is disordered; the sequence is KQSSNDGSDEPLLTGTAERYGSDDTDEDE. A helical membrane pass occupies residues 599–619; it reads LIVPISSLIIFNSGWLVLDGI. An N-linked (GlcNAc...) asparagine glycan is attached at N620. Over 620-631 the chain is Vacuolar; it reads NKSIQESFAAEN. A helical transmembrane segment spans residues 632-652; it reads LIYLLIQLFSQFWILPILPFV. Residues 653-657 are Cytoplasmic-facing; sequence YKLNR. The helical transmembrane segment at 658-678 threads the bilayer; the sequence is FIVFGLTIFAISGVALISFLD. The Vacuolar segment spans residues 679–930; the sequence is PFNQENPLKL…LVSVSLKIEV (252 aa). 4 N-linked (GlcNAc...) asparagine glycosylation sites follow: N697, N768, N808, and N890.

This sequence belongs to the peptidase M28 family. The cofactor is Zn(2+).

The protein localises to the vacuole membrane. Its function is as follows. May be involved in vacuolar sorting and osmoregulation. The sequence is that of Vacuolar membrane protease from Candida dubliniensis (strain CD36 / ATCC MYA-646 / CBS 7987 / NCPF 3949 / NRRL Y-17841) (Yeast).